The chain runs to 433 residues: Phosphomethylpyrimidine synthase (433 aa).

Substrate is bound by residues Asn66, Met94, Tyr123, His162, 184 to 186 (SRG), 225 to 228 (DALR), and Glu264. Residue His268 coordinates Zn(2+). Tyr291 is a substrate binding site. His332 contacts Zn(2+). [4Fe-4S] cluster contacts are provided by Cys408, Cys411, and Cys415.

Belongs to the ThiC family. The cofactor is [4Fe-4S] cluster.

The enzyme catalyses 5-amino-1-(5-phospho-beta-D-ribosyl)imidazole + S-adenosyl-L-methionine = 4-amino-2-methyl-5-(phosphooxymethyl)pyrimidine + CO + 5'-deoxyadenosine + formate + L-methionine + 3 H(+). It functions in the pathway cofactor biosynthesis; thiamine diphosphate biosynthesis. In terms of biological role, catalyzes the synthesis of the hydroxymethylpyrimidine phosphate (HMP-P) moiety of thiamine from aminoimidazole ribotide (AIR) in a radical S-adenosyl-L-methionine (SAM)-dependent reaction. The sequence is that of Phosphomethylpyrimidine synthase from Saccharolobus islandicus (strain M.16.27) (Sulfolobus islandicus).